Here is a 65-residue protein sequence, read N- to C-terminus: Disintegrin VLO4 (65 aa).

In terms of domain architecture, Disintegrin spans 1–65 (MNSGNPCCDP…PDCPRNPWKG (65 aa)). 4 cysteine pairs are disulfide-bonded: cysteine 7/cysteine 30, cysteine 21/cysteine 27, cysteine 26/cysteine 51, and cysteine 39/cysteine 58. A Cell attachment site motif is present at residues 43–45 (RGD).

This sequence belongs to the disintegrin family. Dimeric disintegrin subfamily. In terms of assembly, homodimer; disulfide-linked. In terms of tissue distribution, expressed by the venom gland.

Its subcellular location is the secreted. Poor inhibitor of platelet aggregation. The disintegrin inhibits the adhesion of cells expressing the RGD-dependent integrin alpha-5/beta-1 (ITGA5/ITGB1) to immobilized fibronectin. Inhibition on alpha-2b/beta-3 (ITGA2B/ITGB3) is low. The sequence is that of Disintegrin VLO4 from Macrovipera lebetina obtusa (Levant blunt-nosed viper).